A 294-amino-acid chain; its full sequence is uncharacterized protein (294 aa).

Disordered stretches follow at residues 1 to 148 (MFLR…LEKP) and 268 to 294 (DEAA…GKGL). A phosphoserine mark is found at serine 34 and serine 35. The span at 35–44 (SSENSGSDWD) shows a compositional bias: low complexity. The span at 52–62 (DVGHPKTKDSG) shows a compositional bias: basic and acidic residues. Phosphoserine is present on residues serine 71 and serine 90. Basic and acidic residues-rich tracts occupy residues 73 to 92 (PSKE…DSLK) and 278 to 294 (GLER…GKGL).

This is an uncharacterized protein from Homo sapiens (Human).